We begin with the raw amino-acid sequence, 86 residues long: Large ribosomal subunit protein bL31B (86 aa).

This sequence belongs to the bacterial ribosomal protein bL31 family. Type B subfamily. Part of the 50S ribosomal subunit.

The chain is Large ribosomal subunit protein bL31B from Vibrio parahaemolyticus serotype O3:K6 (strain RIMD 2210633).